Here is a 341-residue protein sequence, read N- to C-terminus: Ribosomal RNA small subunit methyltransferase H (341 aa).

S-adenosyl-L-methionine contacts are provided by residues 47–49 (GGY), Asp64, Phe97, Asp109, and Gln116.

Belongs to the methyltransferase superfamily. RsmH family.

It localises to the cytoplasm. It catalyses the reaction cytidine(1402) in 16S rRNA + S-adenosyl-L-methionine = N(4)-methylcytidine(1402) in 16S rRNA + S-adenosyl-L-homocysteine + H(+). Specifically methylates the N4 position of cytidine in position 1402 (C1402) of 16S rRNA. The polypeptide is Ribosomal RNA small subunit methyltransferase H (Allorhizobium ampelinum (strain ATCC BAA-846 / DSM 112012 / S4) (Agrobacterium vitis (strain S4))).